The primary structure comprises 341 residues: UPF0284 protein Ta0078 (341 aa).

This sequence belongs to the UPF0284 family.

The sequence is that of UPF0284 protein Ta0078 from Thermoplasma acidophilum (strain ATCC 25905 / DSM 1728 / JCM 9062 / NBRC 15155 / AMRC-C165).